Reading from the N-terminus, the 789-residue chain is Protein translocase subunit SecA (789 aa).

Residues Gln-85, 103 to 107 (GEGKT), and Asp-492 contribute to the ATP site.

Belongs to the SecA family. In terms of assembly, monomer and homodimer. Part of the essential Sec protein translocation apparatus which comprises SecA, SecYEG and auxiliary proteins SecDF. Other proteins may also be involved.

It is found in the cell membrane. The protein localises to the cytoplasm. It carries out the reaction ATP + H2O + cellular proteinSide 1 = ADP + phosphate + cellular proteinSide 2.. Its function is as follows. Part of the Sec protein translocase complex. Interacts with the SecYEG preprotein conducting channel. Has a central role in coupling the hydrolysis of ATP to the transfer of proteins into and across the cell membrane, serving as an ATP-driven molecular motor driving the stepwise translocation of polypeptide chains across the membrane. This chain is Protein translocase subunit SecA, found in Limosilactobacillus fermentum (strain NBRC 3956 / LMG 18251) (Lactobacillus fermentum).